Consider the following 88-residue polypeptide: Beta-insect excitatory toxin 2 (88 aa).

A signal peptide spans 1-18 (MKFLLLFLVVLPIMGVLG). In terms of domain architecture, LCN-type CS-alpha/beta spans 20-83 (KNGYAVDSSG…ISDTRKSYCD (64 aa)). 4 disulfide bridges follow: Cys-34/Cys-55, Cys-40/Cys-60, Cys-44/Cys-62, and Cys-56/Cys-82.

This sequence belongs to the long (4 C-C) scorpion toxin superfamily. Sodium channel inhibitor family. Beta subfamily. Expressed by the venom gland.

The protein resides in the secreted. In terms of biological role, excitatory insect beta-toxins induce a spastic paralysis. They bind voltage-independently at site-4 of sodium channels (Nav) and shift the voltage of activation toward more negative potentials thereby affecting sodium channel activation and promoting spontaneous and repetitive firing. This toxin is active only on insects. This Androctonus australis (Sahara scorpion) protein is Beta-insect excitatory toxin 2.